Consider the following 331-residue polypeptide: Cytosolic sulfotransferase 8 (331 aa).

Basic and acidic residues predominate over residues 1 to 11; that stretch reads MGEKDIPRNLK. The tract at residues 1 to 31 is disordered; the sequence is MGEKDIPRNLKEEEEEEEENQSEETKSLISS. The span at 12 to 22 shows a compositional bias: acidic residues; it reads EEEEEEEENQS. 80–85 is a binding site for 3'-phosphoadenylyl sulfate; sequence KSGTTW. H145 functions as the Proton acceptor in the catalytic mechanism. Residues R167, S175, Y231, and 297–299 contribute to the 3'-phosphoadenylyl sulfate site; that span reads RKG.

Belongs to the sulfotransferase 1 family. Expressed in seedlings and roots.

The protein resides in the cytoplasm. In terms of biological role, sulfotransferase that utilizes 3'-phospho-5'-adenylyl sulfate (PAPS) as sulfonate donor. No activity with brassinosteroids. In Arabidopsis thaliana (Mouse-ear cress), this protein is Cytosolic sulfotransferase 8 (SOT8).